Here is a 427-residue protein sequence, read N- to C-terminus: Indole diterpene prenyltransferase idtF (427 aa).

Substrate is bound by residues R97, K195, R264, K266, Y268, and Y352.

It belongs to the tryptophan dimethylallyltransferase family.

Its pathway is secondary metabolite biosynthesis. Its function is as follows. Indole diterpene prenyltransferase; part of the gene cluster that mediates the biosynthesis of paspalitrems, indole-diterpene (IDT) mycotoxins that are potent tremorgens in mammals. The geranylgeranyl diphosphate (GGPP) synthase idtG is proposed to catalyze the first step in IDT biosynthesis via catalysis of a series of iterative condensations of isopentenyl diphosphate (IPP) with dimethylallyl diphosphate (DMAPP), geranyl diphosphate (GPP), and farnesyl diphosphate (FPP), to form GGPP. Condensation of indole-3-glycerol phosphate with GGPP by the prenyltransferase idtC then forms 3-geranylgeranylindole (3-GGI). Epoxidation of the two terminal alkenes of the geranylgeranyl moiety by the FAD-dependent monooxygenase idtM, and cyclization by the terpene cyclase idtB then leads to the production of paspaline. The cytochrome P450 monooxygenase idtP then catalyzes oxidative elimination of the pendant methyl group at C-12 of paspaline and generates the C-10 ketone to yield 13-desoxypaxilline. The cytochrome P450 monooxygenase idtQ may catalyze the C-13 oxidation of 13-desoxypaxilline to afford paxilline. Considering that both paspalicine and paxilline were detected in C.paspali, idtQ also catalyzes the formation of paspalinine from 13-desoxypaxilline via paspalicine as an intermediate. Finally, the alpha-prenyltransferase idtF prenylates paspalinine at the C-20 or the C-21 positions to yield paspalitrems A and C, respectively. The hydroxylation of paspalitrem A at C-32 by a still unknown oxidase affords paspalitrem B. In Claviceps paspali (Rye ergot fungus), this protein is Indole diterpene prenyltransferase idtF.